Consider the following 29-residue polypeptide: Cyclotide mela-7 (29 aa).

Positions 1–29 form a cross-link, cyclopeptide (Gly-Asn); the sequence is GLPTCGETCFKGKCYTPGCSCSYPICKKN. 3 cysteine pairs are disulfide-bonded: C5–C19, C9–C21, and C14–C26.

This is a cyclic peptide. In terms of processing, contains 3 disulfide bonds.

Probably participates in a plant defense mechanism (Potential). Binds to and induces leakage in phospholipd membranes, particularly ones containing 1-palmitoyl-2-oleophosphatidylethanolamine (POPE). In vitro, displays cytotoxicity against cultured cells but no hemolytic activity towards fresh erythrocytes. Not active against Gram-negative bacterium E.coli ATCC 25922 or Gram-positive bacterium S.aureus ATCC 25923 up to a concentration of 64 uM. This Melicytus latifolius (Norfolk Island mahoe) protein is Cyclotide mela-7.